A 327-amino-acid chain; its full sequence is Cytochrome c oxidase subunit 2 (327 aa).

The first 23 residues, Met-1 to Trp-23, serve as a signal peptide directing secretion. 2 consecutive transmembrane segments (helical) span residues Leu-56–Glu-78 and Ala-96–Gln-114. Cu cation is bound by residues His-221, Cys-255, Cys-259, and His-263.

The protein belongs to the cytochrome c oxidase subunit 2 family. Cu cation is required as a cofactor.

The protein resides in the cell membrane. The catalysed reaction is 4 Fe(II)-[cytochrome c] + O2 + 8 H(+)(in) = 4 Fe(III)-[cytochrome c] + 2 H2O + 4 H(+)(out). Subunits I and II form the functional core of the enzyme complex. Electrons originating in cytochrome c are transferred via heme a and Cu(A) to the binuclear center formed by heme a3 and Cu(B). This Thermostichus vulcanus (Synechococcus vulcanus) protein is Cytochrome c oxidase subunit 2 (ctaC).